Reading from the N-terminus, the 321-residue chain is Prephenate dehydratase (321 aa).

Positions R3–R189 constitute a Prephenate dehydratase domain. The region spanning S203–P280 is the ACT domain.

As to quaternary structure, homodimer.

It carries out the reaction prephenate + H(+) = 3-phenylpyruvate + CO2 + H2O. It functions in the pathway amino-acid biosynthesis; L-phenylalanine biosynthesis; phenylpyruvate from prephenate: step 1/1. The polypeptide is Prephenate dehydratase (pheA) (Mycobacterium bovis (strain ATCC BAA-935 / AF2122/97)).